The following is a 179-amino-acid chain: Small heat shock protein hspK (179 aa).

The 147-residue stretch at His32–Lys178 folds into the sHSP domain. A disordered region spans residues Lys80–Ala122. The span at Asn87 to Thr114 shows a compositional bias: low complexity.

Belongs to the small heat shock protein (HSP20) family.

This is Small heat shock protein hspK (hspK) from Dictyostelium discoideum (Social amoeba).